Reading from the N-terminus, the 212-residue chain is FMN-dependent NADH:quinone oxidoreductase (212 aa).

Residues Ser-10, 16–18, and 98–101 each bind FMN; these read SFS and MWNF.

It belongs to the azoreductase type 1 family. In terms of assembly, homodimer. FMN is required as a cofactor.

The enzyme catalyses 2 a quinone + NADH + H(+) = 2 a 1,4-benzosemiquinone + NAD(+). It carries out the reaction N,N-dimethyl-1,4-phenylenediamine + anthranilate + 2 NAD(+) = 2-(4-dimethylaminophenyl)diazenylbenzoate + 2 NADH + 2 H(+). In terms of biological role, quinone reductase that provides resistance to thiol-specific stress caused by electrophilic quinones. Functionally, also exhibits azoreductase activity. Catalyzes the reductive cleavage of the azo bond in aromatic azo compounds to the corresponding amines. The chain is FMN-dependent NADH:quinone oxidoreductase from Desulfotalea psychrophila (strain LSv54 / DSM 12343).